The sequence spans 95 residues: DNA-directed RNA polymerase subunit Rpo11 (95 aa).

Belongs to the archaeal Rpo11/eukaryotic RPB11/RPC19 RNA polymerase subunit family. In terms of assembly, part of the RNA polymerase complex.

Its subcellular location is the cytoplasm. It carries out the reaction RNA(n) + a ribonucleoside 5'-triphosphate = RNA(n+1) + diphosphate. In terms of biological role, DNA-dependent RNA polymerase (RNAP) catalyzes the transcription of DNA into RNA using the four ribonucleoside triphosphates as substrates. In Methanococcus vannielii (strain ATCC 35089 / DSM 1224 / JCM 13029 / OCM 148 / SB), this protein is DNA-directed RNA polymerase subunit Rpo11.